Consider the following 96-residue polypeptide: Large ribosomal subunit protein bL27 (96 aa).

A propeptide spanning residues 1-9 (MLRLDLQFF) is cleaved from the precursor. A disordered region spans residues 14 to 35 (GVGSTKNGRDSQSKRLGAKRAD).

The protein belongs to the bacterial ribosomal protein bL27 family. In terms of processing, the N-terminus is cleaved by ribosomal processing cysteine protease Prp.

The sequence is that of Large ribosomal subunit protein bL27 from Bacillus cytotoxicus (strain DSM 22905 / CIP 110041 / 391-98 / NVH 391-98).